Here is a 686-residue protein sequence, read N- to C-terminus: Methionine--tRNA ligase (686 aa).

The 'HIGH' region motif lies at 15–25; it reads PYANGPIHLGH. The Zn(2+) site is built by Cys-146, Cys-149, Cys-159, and Cys-162. The 'KMSKS' region motif lies at 332-336; the sequence is KMSKS. Lys-335 contributes to the ATP binding site. One can recognise a tRNA-binding domain in the interval 585 to 686; that stretch reads TFAKTDLRVA…DGAKPGQRIM (102 aa).

Belongs to the class-I aminoacyl-tRNA synthetase family. MetG type 1 subfamily. As to quaternary structure, homodimer. Zn(2+) is required as a cofactor.

The protein localises to the cytoplasm. The enzyme catalyses tRNA(Met) + L-methionine + ATP = L-methionyl-tRNA(Met) + AMP + diphosphate. Is required not only for elongation of protein synthesis but also for the initiation of all mRNA translation through initiator tRNA(fMet) aminoacylation. The sequence is that of Methionine--tRNA ligase from Psychromonas ingrahamii (strain DSM 17664 / CCUG 51855 / 37).